The sequence spans 90 residues: Bombyxin G-1 (90 aa).

Residues 1-19 form the signal peptide; sequence MKLIIFVVFCITIYGSTSG. 3 disulfides stabilise this stretch: cysteine 28–cysteine 77, cysteine 40–cysteine 90, and cysteine 76–cysteine 81. Positions 49–67 are cleaved as a propeptide — c peptide like; sequence NTQYEGYHWPLLAYSEERI.

The protein belongs to the insulin family. As to quaternary structure, heterodimer of a B chain and an A chain linked by two disulfide bonds.

The protein localises to the secreted. The polypeptide is Bombyxin G-1 (BBXG1) (Bombyx mori (Silk moth)).